A 402-amino-acid polypeptide reads, in one-letter code: 4-hydroxy-3-methylbut-2-enyl diphosphate reductase (402 aa).

C66 provides a ligand contact to [4Fe-4S] cluster. H96 is a (2E)-4-hydroxy-3-methylbut-2-enyl diphosphate binding site. H96 is a binding site for dimethylallyl diphosphate. H96 contributes to the isopentenyl diphosphate binding site. A [4Fe-4S] cluster-binding site is contributed by C157. H185 provides a ligand contact to (2E)-4-hydroxy-3-methylbut-2-enyl diphosphate. Position 185 (H185) interacts with dimethylallyl diphosphate. Isopentenyl diphosphate is bound at residue H185. E187 serves as the catalytic Proton donor. T250 serves as a coordination point for (2E)-4-hydroxy-3-methylbut-2-enyl diphosphate. [4Fe-4S] cluster is bound at residue C288. S317, S318, N319, and S379 together coordinate (2E)-4-hydroxy-3-methylbut-2-enyl diphosphate. Dimethylallyl diphosphate is bound by residues S317, S318, N319, and S379. The isopentenyl diphosphate site is built by S317, S318, N319, and S379.

It belongs to the IspH family. The cofactor is [4Fe-4S] cluster.

It carries out the reaction isopentenyl diphosphate + 2 oxidized [2Fe-2S]-[ferredoxin] + H2O = (2E)-4-hydroxy-3-methylbut-2-enyl diphosphate + 2 reduced [2Fe-2S]-[ferredoxin] + 2 H(+). The enzyme catalyses dimethylallyl diphosphate + 2 oxidized [2Fe-2S]-[ferredoxin] + H2O = (2E)-4-hydroxy-3-methylbut-2-enyl diphosphate + 2 reduced [2Fe-2S]-[ferredoxin] + 2 H(+). It participates in isoprenoid biosynthesis; dimethylallyl diphosphate biosynthesis; dimethylallyl diphosphate from (2E)-4-hydroxy-3-methylbutenyl diphosphate: step 1/1. Its pathway is isoprenoid biosynthesis; isopentenyl diphosphate biosynthesis via DXP pathway; isopentenyl diphosphate from 1-deoxy-D-xylulose 5-phosphate: step 6/6. Catalyzes the conversion of 1-hydroxy-2-methyl-2-(E)-butenyl 4-diphosphate (HMBPP) into a mixture of isopentenyl diphosphate (IPP) and dimethylallyl diphosphate (DMAPP). Acts in the terminal step of the DOXP/MEP pathway for isoprenoid precursor biosynthesis. This is 4-hydroxy-3-methylbut-2-enyl diphosphate reductase from Thermosynechococcus vestitus (strain NIES-2133 / IAM M-273 / BP-1).